The following is a 189-amino-acid chain: GTPase HRas (189 aa).

At Met1 the chain carries N-acetylmethionine; in GTPase HRas; alternate. Thr2 is modified (N-acetylthreonine; in GTPase HRas, N-terminally processed). Residues 13–18, 29–35, 59–60, 116–119, and 145–147 contribute to the GTP site; these read GVGKSA, VDEYDPT, AG, NKCD, and SAK. The Effector region signature appears at 32–40; the sequence is YDPTIEDSY. (Microbial infection) O-linked (Glc) threonine; by P.sordellii toxin TcsL glycosylation occurs at Thr35. At Cys118 the chain carries S-nitrosocysteine. Positions 166-185 are hypervariable region; it reads HKLRKLNPPDESGPGCMSCK. Lys170 participates in a covalent cross-link: Glycyl lysine isopeptide (Lys-Gly) (interchain with G-Cter in ubiquitin). Cys181 is lipidated: S-palmitoyl cysteine. A lipid anchor (S-(15-deoxy-Delta12,14-prostaglandin J2-9-yl)cysteine; alternate) is attached at Cys184. A lipid anchor (S-palmitoyl cysteine; alternate) is attached at Cys184. Cys186 carries the post-translational modification Cysteine methyl ester. Cys186 is lipidated: S-farnesyl cysteine. Positions 187–189 are cleaved as a propeptide — removed in mature form; it reads VLS.

This sequence belongs to the small GTPase superfamily. Ras family. As to quaternary structure, in its GTP-bound form interacts with PLCE1. Interacts with TBC1D10C. Interacts with RGL3. Interacts with HSPD1. Found in a complex with at least BRAF, HRAS, MAP2K1, MAPK3 and RGS14. Interacts (active GTP-bound form) with RGS14 (via RBD 1 domain). Forms a signaling complex with RASGRP1 and DGKZ. Interacts with RASSF5. Interacts with PDE6D. Interacts with IKZF3. Interacts with RACK1. Interacts with PIK3CG; the interaction is required for membrane recruitment and beta-gamma G protein dimer-dependent activation of the PI3K gamma complex PIK3CG:PIK3R6. Interacts with RAPGEF2. Interacts (active GTP-bound form) with both SHOC2 and PP1c (all isoforms) to form a tertiary complex; SHOC2 and PP1c preferably bind M-Ras/MRAS, but they also bind K-Ras/KRAS, N-Ras/NRAS and H-Ras/HRAS. Interacts (GTP-bound form) with MAPKAP1/SIN1; inhibiting H-Ras/HRAS activity. In terms of processing, palmitoylated by the ZDHHC9-GOLGA7 complex. A continuous cycle of de- and re-palmitoylation regulates rapid exchange between plasma membrane and Golgi. S-nitrosylated; critical for redox regulation. Important for stimulating guanine nucleotide exchange. No structural perturbation on nitrosylation. Post-translationally, the covalent modification of cysteine by 15-deoxy-Delta12,14-prostaglandin-J2 is autocatalytic and reversible. It may occur as an alternative to other cysteine modifications, such as S-nitrosylation and S-palmitoylation. In terms of processing, acetylation at Lys-104 prevents interaction with guanine nucleotide exchange factors (GEFs). Fatty-acylated at Lys-170. Post-translationally, ubiquitinated by the BCR(LZTR1) E3 ubiquitin ligase complex at Lys-170 in a non-degradative manner, leading to inhibit Ras signaling by decreasing Ras association with membranes. In terms of processing, (Microbial infection) Glucosylated at Thr-35 by P.sordellii toxin TcsL. Monoglucosylation completely prevents the recognition of the downstream effector, blocking the GTPases in their inactive form, leading to inhibit Ras signaling. Widely expressed.

It is found in the cell membrane. The protein localises to the golgi apparatus. Its subcellular location is the golgi apparatus membrane. It localises to the nucleus. The protein resides in the cytoplasm. It is found in the perinuclear region. The catalysed reaction is GTP + H2O = GDP + phosphate + H(+). Alternates between an inactive form bound to GDP and an active form bound to GTP. Activated by a guanine nucleotide-exchange factor (GEF) and inactivated by a GTPase-activating protein (GAP). Involved in the activation of Ras protein signal transduction. Ras proteins bind GDP/GTP and possess intrinsic GTPase activity. The protein is GTPase HRas (HRAS) of Homo sapiens (Human).